A 449-amino-acid chain; its full sequence is Asparagine--tRNA ligase (449 aa).

The protein belongs to the class-II aminoacyl-tRNA synthetase family. In terms of assembly, homodimer.

It is found in the cytoplasm. The catalysed reaction is tRNA(Asn) + L-asparagine + ATP = L-asparaginyl-tRNA(Asn) + AMP + diphosphate + H(+). This is Asparagine--tRNA ligase from Mesomycoplasma hyopneumoniae (strain 232) (Mycoplasma hyopneumoniae).